A 364-amino-acid chain; its full sequence is Trans-enoyl reductase sthE (364 aa).

51 to 54 lines the NADP(+) pocket; the sequence is TDYK. Residue 137–144 coordinates substrate; the sequence is WGTAALAI. Residues 172–175, 195–198, Y213, and 261–262 each bind NADP(+); these read ATAT, SESS, and LE. 281 to 285 contacts substrate; that stretch reads GFEGQ. Position 351-352 (351-352) interacts with NADP(+); it reads VK.

Belongs to the zinc-containing alcohol dehydrogenase family. Monomer.

It catalyses the reaction 7 malonyl-CoA + acetyl-CoA + 10 AH2 + 5 S-adenosyl-L-methionine + 2 H(+) = dehydroprobetaenone I + 10 A + 5 S-adenosyl-L-homocysteine + 7 CO2 + 8 CoA + 6 H2O. The protein operates within mycotoxin biosynthesis. Its function is as follows. Trans-enoyl reductase; part of the gene cluster that mediates the biosynthesis of the phytotoxin stemphyloxin II. The first step of the pathway is the synthesis of dehydroprobetaenone I by the polyketide synthase sthA and the enoyl reductase sthE via condensation of one acetyl-CoA starter unit with 7 malonyl-CoA units and 5 methylations. The C-terminal reductase (R) domain of sthA catalyzes the reductive release of the polyketide chain. Because sthA lacks a designated enoylreductase (ER) domain, the required activity is provided the enoyl reductase sthE. The short-chain dehydrogenase/reductase sthC then catalyzes reduction of dehydroprobetaenone I to probetaenone I. The cytochrome P450 monooxygenase sthF catalyzes successive epoxidation, oxidation (resulting from epoxide opening) and hydroxylation to install a tertiary alcohol in the decaline ring to yield betaenone C from dehydroprobetaenone I and betaenone B from probetaenone I. The FAD-linked oxidoreductase sthB is responsible for the conversion of betaenone C to betaenone A via an intramolecular aldol reaction between C-1 and C-17 to form the bridged tricyclic system in betaenone A. Finally, the cytochrome P450 monooxygenase sthD catalyzes the hydroxylation of C-15 to afford the final metabolite stemphyloxin II. The polypeptide is Trans-enoyl reductase sthE (Phaeosphaeria nodorum (strain SN15 / ATCC MYA-4574 / FGSC 10173) (Glume blotch fungus)).